The chain runs to 248 residues: MNQTNFGFKKIKANEKQSLVNSVFSNVADKYDLMNDLMSFGMHRLWKDEFIRQIPNLNSNILDVASGSGDIALKLAKKAKDRGSNISLTLSDINEEMLRQAKKKSIDLNLFQNLKFTVASAEELPFPDNSFDYYTIAFGIRNVPDINKALKEAYRVLKPMGKFICLEFSKVKESLLQDFYKFYSFNVIPKIGKIITGNKEAYDYLVESIDLFPSQDEFRIMIKEAGFEEINYKNLSGGIVAIHSAYKL.

The S-adenosyl-L-methionine site is built by serine 68 and aspartate 92.

It belongs to the class I-like SAM-binding methyltransferase superfamily. MenG/UbiE family.

The catalysed reaction is a 2-demethylmenaquinol + S-adenosyl-L-methionine = a menaquinol + S-adenosyl-L-homocysteine + H(+). It catalyses the reaction a 2-methoxy-6-(all-trans-polyprenyl)benzene-1,4-diol + S-adenosyl-L-methionine = a 5-methoxy-2-methyl-3-(all-trans-polyprenyl)benzene-1,4-diol + S-adenosyl-L-homocysteine + H(+). It participates in quinol/quinone metabolism; menaquinone biosynthesis; menaquinol from 1,4-dihydroxy-2-naphthoate: step 2/2. It functions in the pathway cofactor biosynthesis; ubiquinone biosynthesis. Methyltransferase required for the conversion of demethylmenaquinol (DMKH2) to menaquinol (MKH2) and the conversion of 2-polyprenyl-6-methoxy-1,4-benzoquinol (DDMQH2) to 2-polyprenyl-3-methyl-6-methoxy-1,4-benzoquinol (DMQH2). The protein is Ubiquinone/menaquinone biosynthesis C-methyltransferase UbiE of Rickettsia bellii (strain OSU 85-389).